Here is a 575-residue protein sequence, read N- to C-terminus: Isocitrate dehydrogenase kinase/phosphatase (575 aa).

ATP is bound by residues 315–321 (APGVKGM) and Lys-336. Asp-371 is an active-site residue.

This sequence belongs to the AceK family.

It localises to the cytoplasm. It carries out the reaction L-seryl-[isocitrate dehydrogenase] + ATP = O-phospho-L-seryl-[isocitrate dehydrogenase] + ADP + H(+). Functionally, bifunctional enzyme which can phosphorylate or dephosphorylate isocitrate dehydrogenase (IDH) on a specific serine residue. This is a regulatory mechanism which enables bacteria to bypass the Krebs cycle via the glyoxylate shunt in response to the source of carbon. When bacteria are grown on glucose, IDH is fully active and unphosphorylated, but when grown on acetate or ethanol, the activity of IDH declines drastically concomitant with its phosphorylation. The chain is Isocitrate dehydrogenase kinase/phosphatase from Yersinia enterocolitica serotype O:8 / biotype 1B (strain NCTC 13174 / 8081).